We begin with the raw amino-acid sequence, 156 residues long: Small ribosomal subunit protein uS7 (156 aa).

It belongs to the universal ribosomal protein uS7 family. As to quaternary structure, part of the 30S ribosomal subunit. Contacts proteins S9 and S11.

One of the primary rRNA binding proteins, it binds directly to 16S rRNA where it nucleates assembly of the head domain of the 30S subunit. Is located at the subunit interface close to the decoding center, probably blocks exit of the E-site tRNA. The chain is Small ribosomal subunit protein uS7 from Shouchella clausii (strain KSM-K16) (Alkalihalobacillus clausii).